A 419-amino-acid polypeptide reads, in one-letter code: Ubiquitin receptor RAD23c (419 aa).

The Ubiquitin-like domain occupies 1–79 (MKIFVKTLKG…IVIMMNKSKP (79 aa)). Over residues 83 to 118 (AASSASAGTSQAKSIPPSTSQPSISPQTPASVSAPV) the composition is skewed to low complexity. Positions 83 to 172 (AASSASAGTS…DSAPVGSQGD (90 aa)) are disordered. The span at 119–135 (APAPTRPPPPAPTPTPA) shows a compositional bias: pro residues. A compositionally biased stretch (low complexity) spans 136 to 146 (PVAATETVTTP). A UBA 1 domain is found at 185 to 228 (SNLESTIQQILDMGGGTWDRETVVLALRAAFNNPERAVEYLYTG). The disordered stretch occupies residues 235–282 (VPPVARPPASAGQPANPPAQTQQPAAAPASGPNANPLDLFPQGLPNVG). Over residues 245–270 (AGQPANPPAQTQQPAAAPASGPNANP) the composition is skewed to low complexity. The 44-residue stretch at 288–331 (GTLDFLRNSQQFQALRAMVQANPQVLQPMLQELGKQNPNLMRLI) folds into the STI1 domain. The UBA 2 domain maps to 372–413 (THEEREAIERLEAMGFERALVLEVFFACNKNEELAANYLLDH).

This sequence belongs to the RAD23 family. Interacts with 'Lys-48'-linked polyubiquitin chains via its both UBA domains. Interacts with RPN10 via its ubiquitin-like domain. In terms of tissue distribution, widely expressed in the whole plant.

It is found in the nucleus. Its subcellular location is the cytoplasm. Functionally, may be involved in nucleotide excision repair. Binds and presumably selects ubiquitin-conjugates for destruction. Prefers multiubiquitin chains rather than single ubiquitins, with a binding affinity for 'Lys-48'-linked ubiquitin chains. Acts as a ubiquitin receptor that associates with the 26S proteasomal docking subunit RPN10 for the indirect recognition of ubiquitinated substrates of ubiquitin/26S proteasome-mediated proteolysis (UPP). Involved in UV tolerance in hypocotyls, specifically in dark conditions. The protein is Ubiquitin receptor RAD23c of Arabidopsis thaliana (Mouse-ear cress).